The sequence spans 159 residues: Ribosomal RNA large subunit methyltransferase H (159 aa).

S-adenosyl-L-methionine-binding positions include Leu-76, Gly-108, and 127 to 132; that span reads FSKMTF.

It belongs to the RNA methyltransferase RlmH family. In terms of assembly, homodimer.

Its subcellular location is the cytoplasm. The catalysed reaction is pseudouridine(1915) in 23S rRNA + S-adenosyl-L-methionine = N(3)-methylpseudouridine(1915) in 23S rRNA + S-adenosyl-L-homocysteine + H(+). Specifically methylates the pseudouridine at position 1915 (m3Psi1915) in 23S rRNA. The sequence is that of Ribosomal RNA large subunit methyltransferase H from Bifidobacterium longum (strain DJO10A).